The chain runs to 310 residues: N-acetyl-gamma-glutamyl-phosphate reductase (310 aa).

C117 is an active-site residue.

This sequence belongs to the NAGSA dehydrogenase family. Type 2 subfamily.

The protein resides in the cytoplasm. It carries out the reaction N-acetyl-L-glutamate 5-semialdehyde + phosphate + NADP(+) = N-acetyl-L-glutamyl 5-phosphate + NADPH + H(+). Its pathway is amino-acid biosynthesis; L-arginine biosynthesis; N(2)-acetyl-L-ornithine from L-glutamate: step 3/4. Catalyzes the NADPH-dependent reduction of N-acetyl-5-glutamyl phosphate to yield N-acetyl-L-glutamate 5-semialdehyde. This chain is N-acetyl-gamma-glutamyl-phosphate reductase, found in Brucella abortus (strain S19).